The sequence spans 104 residues: Urease subunit beta (104 aa).

The protein belongs to the urease beta subunit family. Heterotrimer of UreA (gamma), UreB (beta) and UreC (alpha) subunits. Three heterotrimers associate to form the active enzyme.

The protein resides in the cytoplasm. The enzyme catalyses urea + 2 H2O + H(+) = hydrogencarbonate + 2 NH4(+). Its pathway is nitrogen metabolism; urea degradation; CO(2) and NH(3) from urea (urease route): step 1/1. This Rhodopseudomonas palustris (strain BisB18) protein is Urease subunit beta.